The following is a 225-amino-acid chain: uncharacterized protein (225 aa).

Residues 2 to 22 (TIFYLVFIAVIIIIILYVLYL) traverse the membrane as a helical segment. Asn73 is a glycosylation site (N-linked (GlcNAc...) asparagine; by host). A coiled-coil region spans residues 114–146 (DYEDNYFNSNWNLKQLKNQLENLLREKNYKMVL). Asn222 carries N-linked (GlcNAc...) asparagine; by host glycosylation.

It localises to the membrane. This is an uncharacterized protein from Acanthamoeba polyphaga (Amoeba).